A 187-amino-acid chain; its full sequence is Holliday junction branch migration complex subunit RuvA (187 aa).

Residues 1–64 (MIEYVRGIIE…EDGFQIFGFK (64 aa)) form a domain I region. The segment at 65–136 (TKEELDLFEK…ELKDKLPKEI (72 aa)) is domain II. Residues 136–139 (IVFE) are flexible linker. Positions 140–187 (GDNNFSNEALEALLALGYTKSEAIYALADITCDSVEDAVKQALKKLMK) are domain III.

This sequence belongs to the RuvA family. Homotetramer. Forms an RuvA(8)-RuvB(12)-Holliday junction (HJ) complex. HJ DNA is sandwiched between 2 RuvA tetramers; dsDNA enters through RuvA and exits via RuvB. An RuvB hexamer assembles on each DNA strand where it exits the tetramer. Each RuvB hexamer is contacted by two RuvA subunits (via domain III) on 2 adjacent RuvB subunits; this complex drives branch migration. In the full resolvosome a probable DNA-RuvA(4)-RuvB(12)-RuvC(2) complex forms which resolves the HJ.

It is found in the cytoplasm. The RuvA-RuvB-RuvC complex processes Holliday junction (HJ) DNA during genetic recombination and DNA repair, while the RuvA-RuvB complex plays an important role in the rescue of blocked DNA replication forks via replication fork reversal (RFR). RuvA specifically binds to HJ cruciform DNA, conferring on it an open structure. The RuvB hexamer acts as an ATP-dependent pump, pulling dsDNA into and through the RuvAB complex. HJ branch migration allows RuvC to scan DNA until it finds its consensus sequence, where it cleaves and resolves the cruciform DNA. The protein is Holliday junction branch migration complex subunit RuvA of Thermoanaerobacter pseudethanolicus (strain ATCC 33223 / 39E) (Clostridium thermohydrosulfuricum).